The chain runs to 179 residues: Large ribosomal subunit protein uL5c (179 aa).

The protein belongs to the universal ribosomal protein uL5 family. As to quaternary structure, part of the 50S ribosomal subunit; contacts the 5S rRNA.

The protein resides in the plastid. It localises to the chloroplast. Its function is as follows. Binds 5S rRNA, forms part of the central protuberance of the 50S subunit. The polypeptide is Large ribosomal subunit protein uL5c (rpl5) (Euglena gracilis).